The following is a 381-amino-acid chain: Putative F-box/kelch-repeat protein At3g17570 (381 aa).

The 45-residue stretch at 1-45 (MFTDLPRDLETEILSRVPATSLQKLKPTCKRWYTLFKDPEFLKKH) folds into the F-box domain. 3 Kelch repeats span residues 151 to 199 (SYKI…TLKG), 229 to 281 (LLYQ…KIVE), and 331 to 379 (RFYI…GGKR).

The chain is Putative F-box/kelch-repeat protein At3g17570 from Arabidopsis thaliana (Mouse-ear cress).